The primary structure comprises 298 residues: Small ribosomal subunit biogenesis GTPase RsgA (298 aa).

One can recognise a CP-type G domain in the interval 67-228 (TNELVRPPIS…IADTPGFSSL (162 aa)). GTP is bound by residues 116-119 (TKMD) and 171-179 (GQSGVGKSS). Cys-252, Cys-257, His-259, and Cys-265 together coordinate Zn(2+).

Belongs to the TRAFAC class YlqF/YawG GTPase family. RsgA subfamily. Monomer. Associates with 30S ribosomal subunit, binds 16S rRNA. The cofactor is Zn(2+).

It localises to the cytoplasm. Functionally, one of several proteins that assist in the late maturation steps of the functional core of the 30S ribosomal subunit. Helps release RbfA from mature subunits. May play a role in the assembly of ribosomal proteins into the subunit. Circularly permuted GTPase that catalyzes slow GTP hydrolysis, GTPase activity is stimulated by the 30S ribosomal subunit. The polypeptide is Small ribosomal subunit biogenesis GTPase RsgA (Bacillus pumilus (strain SAFR-032)).